A 477-amino-acid polypeptide reads, in one-letter code: Ribulose bisphosphate carboxylase large chain (477 aa).

A propeptide spanning residues 1-2 is cleaved from the precursor; it reads MS. Proline 3 is subject to N-acetylproline. Positions 123 and 173 each coordinate substrate. The Proton acceptor role is filled by lysine 175. A substrate-binding site is contributed by lysine 177. 3 residues coordinate Mg(2+): lysine 201, aspartate 203, and glutamate 204. N6-carboxylysine is present on lysine 201. Residue histidine 294 is the Proton acceptor of the active site. Positions 295, 327, and 379 each coordinate substrate.

The protein belongs to the RuBisCO large chain family. Type I subfamily. Heterohexadecamer of 8 large chains and 8 small chains; disulfide-linked. The disulfide link is formed within the large subunit homodimers. Mg(2+) is required as a cofactor. The disulfide bond which can form in the large chain dimeric partners within the hexadecamer appears to be associated with oxidative stress and protein turnover.

Its subcellular location is the plastid. The protein resides in the chloroplast. The enzyme catalyses 2 (2R)-3-phosphoglycerate + 2 H(+) = D-ribulose 1,5-bisphosphate + CO2 + H2O. The catalysed reaction is D-ribulose 1,5-bisphosphate + O2 = 2-phosphoglycolate + (2R)-3-phosphoglycerate + 2 H(+). Functionally, ruBisCO catalyzes two reactions: the carboxylation of D-ribulose 1,5-bisphosphate, the primary event in carbon dioxide fixation, as well as the oxidative fragmentation of the pentose substrate in the photorespiration process. Both reactions occur simultaneously and in competition at the same active site. This is Ribulose bisphosphate carboxylase large chain from Lolium perenne (Perennial ryegrass).